A 100-amino-acid chain; its full sequence is Small ribosomal subunit protein uS14 (100 aa).

Belongs to the universal ribosomal protein uS14 family. Part of the 30S ribosomal subunit. Contacts proteins S3 and S10.

Functionally, binds 16S rRNA, required for the assembly of 30S particles and may also be responsible for determining the conformation of the 16S rRNA at the A site. The sequence is that of Small ribosomal subunit protein uS14 from Parasynechococcus marenigrum (strain WH8102).